A 297-amino-acid polypeptide reads, in one-letter code: Phosphatidylserine decarboxylase proenzyme (297 aa).

Catalysis depends on charge relay system; for autoendoproteolytic cleavage activity residues aspartate 100, histidine 157, and serine 263. Serine 263 functions as the Schiff-base intermediate with substrate; via pyruvic acid; for decarboxylase activity in the catalytic mechanism. Serine 263 is modified (pyruvic acid (Ser); by autocatalysis).

It belongs to the phosphatidylserine decarboxylase family. PSD-B subfamily. Prokaryotic type I sub-subfamily. In terms of assembly, heterodimer of a large membrane-associated beta subunit and a small pyruvoyl-containing alpha subunit. Pyruvate is required as a cofactor. In terms of processing, is synthesized initially as an inactive proenzyme. Formation of the active enzyme involves a self-maturation process in which the active site pyruvoyl group is generated from an internal serine residue via an autocatalytic post-translational modification. Two non-identical subunits are generated from the proenzyme in this reaction, and the pyruvate is formed at the N-terminus of the alpha chain, which is derived from the carboxyl end of the proenzyme. The autoendoproteolytic cleavage occurs by a canonical serine protease mechanism, in which the side chain hydroxyl group of the serine supplies its oxygen atom to form the C-terminus of the beta chain, while the remainder of the serine residue undergoes an oxidative deamination to produce ammonia and the pyruvoyl prosthetic group on the alpha chain. During this reaction, the Ser that is part of the protease active site of the proenzyme becomes the pyruvoyl prosthetic group, which constitutes an essential element of the active site of the mature decarboxylase.

It localises to the cell membrane. It catalyses the reaction a 1,2-diacyl-sn-glycero-3-phospho-L-serine + H(+) = a 1,2-diacyl-sn-glycero-3-phosphoethanolamine + CO2. The protein operates within phospholipid metabolism; phosphatidylethanolamine biosynthesis; phosphatidylethanolamine from CDP-diacylglycerol: step 2/2. In terms of biological role, catalyzes the formation of phosphatidylethanolamine (PtdEtn) from phosphatidylserine (PtdSer). This is Phosphatidylserine decarboxylase proenzyme from Haemophilus ducreyi (strain 35000HP / ATCC 700724).